The chain runs to 171 residues: MTSLLITGYKSFELGVFKDKDPKVNIIKKAIKRDLKRFLDEGVDWMIFTGNLGFEFWALEVAKELQKDYPLRLATLFPFKTHGQNWSEANQEKLAAFKQVDFVKYSFPAYQSPAQFKQFNQFLIDNTDQAYLFYEPENETNLKYFYNMIIAASDYPLFRLTFDDLNEVMSE.

Belongs to the UPF0398 family.

This Streptococcus thermophilus (strain ATCC BAA-250 / LMG 18311) protein is UPF0398 protein stu0232.